Here is a 396-residue protein sequence, read N- to C-terminus: Decapping and exoribonuclease protein (396 aa).

Residues 1-20 (MDPRGTKRGAEKTEVAEPRN) show a composition bias toward basic and acidic residues. Residues 1–37 (MDPRGTKRGAEKTEVAEPRNKLPRPAPSLPTDPALYS) are disordered. Residues Arg58, Glu101, and 131–133 (WRG) contribute to the substrate site. Glu192 contributes to the Mg(2+) binding site. Substrate-binding residues include Cys217 and Glu234. Mg(2+) contacts are provided by Glu234, Asp236, Glu253, and Leu254. Lys255 and Gln280 together coordinate substrate. Thr392 carries the phosphothreonine modification. Ser394 is modified (phosphoserine).

It belongs to the DXO/Dom3Z family. The cofactor is Mg(2+). In terms of tissue distribution, ubiquitously expressed.

The protein resides in the nucleus. The enzyme catalyses a 5'-end triphospho-ribonucleoside in mRNA + H2O = a 5'-end phospho-ribonucleoside in mRNA + diphosphate + H(+). It carries out the reaction a 5'-end NAD(+)-phospho-ribonucleoside in mRNA + H2O = a 5'-end phospho-ribonucleoside in mRNA + NAD(+) + H(+). It catalyses the reaction a 5'-end NAD(+)-phospho-ribonucleoside in snoRNA + H2O = a 5'-end phospho-ribonucleoside in snoRNA + NAD(+) + H(+). The catalysed reaction is a 5'-end (N(7)-methyl 5'-triphosphoguanosine)-ribonucleoside-ribonucleotide in mRNA + H2O = a (N(7)-methyl 5'-triphosphoguanosine)-nucleoside + a 5'-end phospho-ribonucleoside in mRNA + H(+). The enzyme catalyses a 5'-end FAD-phospho-ribonucleoside in mRNA + H2O = a 5'-end phospho-ribonucleoside in mRNA + FAD + H(+). It carries out the reaction a 5'-end CoA-ribonucleoside in mRNA + H2O = 3'-dephospho-CoA + a 5'-end phospho-ribonucleoside in mRNA + H(+). Functionally, decapping enzyme for NAD-capped RNAs: specifically hydrolyzes the nicotinamide adenine dinucleotide (NAD) cap from a subset of RNAs by removing the entire NAD moiety from the 5'-end of an NAD-capped RNA. The NAD-cap is present at the 5'-end of some RNAs and snoRNAs. In contrast to the canonical 5'-end N7 methylguanosine (m7G) cap, the NAD cap promotes mRNA decay. Preferentially acts on NAD-capped transcripts in response to environmental stress. Also acts as a non-canonical decapping enzyme that removes the entire cap structure of m7G capped or incompletely capped RNAs and mediates their subsequent degradation. Specifically degrades pre-mRNAs with a defective 5'-end m7G cap and is part of a pre-mRNA capping quality control. Has decapping activity toward incomplete 5'-end m7G cap mRNAs such as unmethylated 5'-end-capped RNA (cap0), while it has no activity toward 2'-O-ribose methylated m7G cap (cap1). In contrast to canonical decapping enzymes DCP2 and NUDT16, which cleave the cap within the triphosphate linkage, the decapping activity releases the entire cap structure GpppN and a 5'-end monophosphate RNA. Also has 5'-3' exoribonuclease activities: The 5'-end monophosphate RNA is then degraded by the 5'-3' exoribonuclease activity, enabling this enzyme to decap and degrade incompletely capped mRNAs. Also possesses RNA 5'-pyrophosphohydrolase activity by hydrolyzing the 5'-end triphosphate to release pyrophosphates. Exhibits decapping activity towards FAD-capped RNAs. Exhibits decapping activity towards dpCoA-capped RNAs in vitro. The protein is Decapping and exoribonuclease protein of Homo sapiens (Human).